A 160-amino-acid chain; its full sequence is Cyclic pyranopterin monophosphate synthase (160 aa).

Residues 74 to 76 (LSH) and 112 to 113 (ME) each bind substrate. The active site involves aspartate 127.

It belongs to the MoaC family. In terms of assembly, homohexamer; trimer of dimers.

The enzyme catalyses (8S)-3',8-cyclo-7,8-dihydroguanosine 5'-triphosphate = cyclic pyranopterin phosphate + diphosphate. It functions in the pathway cofactor biosynthesis; molybdopterin biosynthesis. Its function is as follows. Catalyzes the conversion of (8S)-3',8-cyclo-7,8-dihydroguanosine 5'-triphosphate to cyclic pyranopterin monophosphate (cPMP). The polypeptide is Cyclic pyranopterin monophosphate synthase (Trichlorobacter lovleyi (strain ATCC BAA-1151 / DSM 17278 / SZ) (Geobacter lovleyi)).